Consider the following 217-residue polypeptide: Probable GTP-binding protein EngB (217 aa).

One can recognise an EngB-type G domain in the interval 29–213 (GPLEVAFAGR…RQAIGETVGV (185 aa)). GTP-binding positions include 37–44 (GRSNVGKS), 64–68 (GRTQE), 91–94 (DMPG), 158–161 (TKTD), and 192–194 (TSS). The Mg(2+) site is built by S44 and T66.

The protein belongs to the TRAFAC class TrmE-Era-EngA-EngB-Septin-like GTPase superfamily. EngB GTPase family. Requires Mg(2+) as cofactor.

Necessary for normal cell division and for the maintenance of normal septation. The protein is Probable GTP-binding protein EngB of Rhizobium leguminosarum bv. trifolii (strain WSM2304).